Consider the following 173-residue polypeptide: 3-hydroxydecanoyl-[acyl-carrier-protein] dehydratase (173 aa).

Residue His71 is part of the active site.

Belongs to the thioester dehydratase family. FabA subfamily. In terms of assembly, homodimer.

It is found in the cytoplasm. The enzyme catalyses a (3R)-hydroxyacyl-[ACP] = a (2E)-enoyl-[ACP] + H2O. The catalysed reaction is (3R)-hydroxydecanoyl-[ACP] = (2E)-decenoyl-[ACP] + H2O. It carries out the reaction (2E)-decenoyl-[ACP] = (3Z)-decenoyl-[ACP]. It participates in lipid metabolism; fatty acid biosynthesis. Functionally, necessary for the introduction of cis unsaturation into fatty acids. Catalyzes the dehydration of (3R)-3-hydroxydecanoyl-ACP to E-(2)-decenoyl-ACP and then its isomerization to Z-(3)-decenoyl-ACP. Can catalyze the dehydratase reaction for beta-hydroxyacyl-ACPs with saturated chain lengths up to 16:0, being most active on intermediate chain length. The chain is 3-hydroxydecanoyl-[acyl-carrier-protein] dehydratase from Bradyrhizobium sp. (strain BTAi1 / ATCC BAA-1182).